A 367-amino-acid polypeptide reads, in one-letter code: 3-dehydroquinate synthase (367 aa).

Residues 69–74, 103–107, 127–128, lysine 140, lysine 149, and 167–170 contribute to the NAD(+) site; these read DGEAFK, GVVGD, TT, and TLAT. Zn(2+) is bound by residues glutamate 182, histidine 245, and histidine 262.

This sequence belongs to the sugar phosphate cyclases superfamily. Dehydroquinate synthase family. It depends on Co(2+) as a cofactor. Zn(2+) serves as cofactor. NAD(+) is required as a cofactor.

It localises to the cytoplasm. It catalyses the reaction 7-phospho-2-dehydro-3-deoxy-D-arabino-heptonate = 3-dehydroquinate + phosphate. It functions in the pathway metabolic intermediate biosynthesis; chorismate biosynthesis; chorismate from D-erythrose 4-phosphate and phosphoenolpyruvate: step 2/7. Functionally, catalyzes the conversion of 3-deoxy-D-arabino-heptulosonate 7-phosphate (DAHP) to dehydroquinate (DHQ). This is 3-dehydroquinate synthase from Azotobacter vinelandii (strain DJ / ATCC BAA-1303).